A 468-amino-acid polypeptide reads, in one-letter code: Glutamate--tRNA ligase (468 aa).

A 'HIGH' region motif is present at residues 10–20 (PSPTGDLHIGG). Zn(2+) is bound by residues Cys99, Cys101, Cys126, and Asp128. Positions 236-240 (RLSKR) match the 'KMSKS' region motif. Lys239 is an ATP binding site.

Belongs to the class-I aminoacyl-tRNA synthetase family. Glutamate--tRNA ligase type 1 subfamily. Monomer. The cofactor is Zn(2+).

The protein resides in the cytoplasm. The enzyme catalyses tRNA(Glu) + L-glutamate + ATP = L-glutamyl-tRNA(Glu) + AMP + diphosphate. In terms of biological role, catalyzes the attachment of glutamate to tRNA(Glu) in a two-step reaction: glutamate is first activated by ATP to form Glu-AMP and then transferred to the acceptor end of tRNA(Glu). The polypeptide is Glutamate--tRNA ligase (Syntrophobacter fumaroxidans (strain DSM 10017 / MPOB)).